The chain runs to 40 residues: Dolichyl-diphosphooligosaccharide--protein glycosyltransferase subunit 4 (40 aa).

Topologically, residues 1–4 (MITD) are lumenal. Residues 5 to 25 (VQLAIFSNVLGVFLFLLVVAY) form a helical membrane-spanning segment. The Cytoplasmic segment spans residues 26-40 (HYINANTGKSIIKSK).

It belongs to the OST4 family. As to quaternary structure, component of the oligosaccharyltransferase (OST) complex.

It is found in the endoplasmic reticulum membrane. In terms of biological role, subunit of the oligosaccharyl transferase (OST) complex that catalyzes the initial transfer of a defined glycan (Glc(3)Man(9)GlcNAc(2) in eukaryotes) from the lipid carrier dolichol-pyrophosphate to an asparagine residue within an Asn-X-Ser/Thr consensus motif in nascent polypeptide chains, the first step in protein N-glycosylation. N-glycosylation occurs cotranslationally and the complex associates with the Sec61 complex at the channel-forming translocon complex that mediates protein translocation across the endoplasmic reticulum (ER). All subunits are required for a maximal enzyme activity. This Drosophila grimshawi (Hawaiian fruit fly) protein is Dolichyl-diphosphooligosaccharide--protein glycosyltransferase subunit 4.